We begin with the raw amino-acid sequence, 298 residues long: DDRGK domain-containing protein 1 (298 aa).

A helical membrane pass occupies residues 1–21 (MDIVLYFVAVPILIVLIVSAV). Residues 22–298 (KVRGKTEEDN…NLIPEIHNTA (277 aa)) are Cytoplasmic-facing. Positions 71–149 (NSAYREAADN…EERRKEDKKE (79 aa)) are disordered. Residues 82 to 94 (SPVEVEEEYEEAE) are compositionally biased toward acidic residues. Residues 110 to 149 (KLEEKQAKRAQREAELEEREERKRTQELREEERRKEDKKE) are compositionally biased toward basic and acidic residues. Residues 181 to 195 (SFVVEEQGEADELTE) carry the UFM1-interacting motif (UFIM) motif. The PCI domain occupies 215–259 (VLLEDLASHFGLRTQDAISRLQDLLSDGSITGVIDDRGKFIFITP).

Belongs to the DDRGK1 family. As to quaternary structure, component of the UFM1 ribosome E3 ligase (UREL) complex, composed of ufl1, ddrgk1 and cdk5rap3.

Its subcellular location is the endoplasmic reticulum membrane. Component of the UFM1 ribosome E3 ligase (UREL) complex, a multiprotein complex that catalyzes ufmylation of endoplasmic reticulum-docked proteins. The UREL complex plays a key role in ribosome recycling by mediating mono-ufmylation of the RPL26/uL24 subunit of the 60S ribosome following ribosome dissociation: ufmylation weakens the junction between post-termination 60S subunits and SEC61 translocons, promoting release and recycling of the large ribosomal subunit from the endoplasmic reticulum membrane. Ufmylation of RPL26/uL24 and subsequent 60S ribosome recycling either take place after normal termination of translation or after ribosome stalling during cotranslational translocation at the endoplasmic reticulum. Within the UREL complex, DDRGK1 tethers the complex to the endoplasmic reticulum membrane to restrict its activity to endoplasmic reticulum-docked ribosomes and acts as an ufmylation 'reader': following RPL26/uL24 ufmylation, DDRGK1 specifically binds to ufmylated RPL26/uL24 via its UFIM motif, resulting in stable association between the 60S ribosome and the UREL complex, followed by dissociation of the 60S ribosome subunit from the endoplasmic reticulum membrane. The UREL complex is also involved in reticulophagy in response to endoplasmic reticulum stress by promoting ufmylation of proteins such as CYB5R3 and RPN1, thereby promoting lysosomal degradation of ufmylated proteins. Required for stabilization and ufmylation of ATG9A. This is DDRGK domain-containing protein 1 from Osmerus mordax (Rainbow smelt).